Consider the following 1286-residue polypeptide: Protein patched (1286 aa).

The Cytoplasmic portion of the chain corresponds to 1 to 76 (MDRDSLPRVP…GSSVQKHAGK (76 aa)). Residues 77–92 (VLFVAILVLSTFCVGL) traverse the membrane as a helical segment. Over 93–427 (KSAQIHSKVH…DDILAKFSHP (335 aa)) the chain is Extracellular. Asn-142, Asn-298, Asn-335, and Asn-388 each carry an N-linked (GlcNAc...) asparagine glycan. Residues 428-448 (SALSIVIGVAVTVLYAFCTLL) traverse the membrane as a helical segment. In terms of domain architecture, SSD spans 428-583 (SALSIVIGVA…LLVFPAMISL (156 aa)). Over 449–465 (RWRDPVRGQSSVGVAGV) the chain is Cytoplasmic. A helical transmembrane segment spans residues 466 to 486 (LLMCFSTAAGLGLSALLGIVF). The Extracellular portion of the chain corresponds to 487-492 (NAASTQ). A helical membrane pass occupies residues 493 to 511 (VVPFLALGLGVDHIFMLTA). The Cytoplasmic portion of the chain corresponds to 512–532 (AYAESNRREQTKLILKKVGPS). Residues 533–553 (ILFSACSTAGSFFAAAFIPVP) traverse the membrane as a helical segment. Over 554–562 (ALKVFCLQA) the chain is Extracellular. The helical transmembrane segment at 563–583 (AIVMCSNLAAALLVFPAMISL) threads the bilayer. At 584–677 (DLRRRTAGRA…QHYTPFLMRS (94 aa)) the chain is on the cytoplasmic side. A helical membrane pass occupies residues 678–699 (WVKFLTVMGFLAALISSLYAST). The Extracellular segment spans residues 700-931 (RLQDGLDIID…IRDLSVKYEG (232 aa)). The N-linked (GlcNAc...) asparagine glycan is linked to Asn-807. Residues 932–952 (FGLPNYPSGIPFIFWEQYMTL) traverse the membrane as a helical segment. The Cytoplasmic portion of the chain corresponds to 953–955 (RSS). A helical membrane pass occupies residues 956 to 976 (LAMILACVLLAALVLVSLLLL). Residues 977 to 1007 (SVWAAVLVILSVLASLAQIFGAMTLLGIKLS) lie on the Extracellular side of the membrane. A helical transmembrane segment spans residues 1008–1028 (AIPAVILILSVGMMLCFNVLI). Over 1029-1056 (SLGFMTSVGNRQRRVQLSMQMSLGPLVH) the chain is Cytoplasmic. The chain crosses the membrane as a helical span at residues 1057-1077 (GMLTSGVAVFMLSTSPFEFVI). Residues 1078–1082 (RHFCW) are Extracellular-facing. A helical transmembrane segment spans residues 1083–1103 (LLLVVLCVGACNSLLVFPILL). At 1104–1286 (SMVGPEAELV…RAVRSYNFTS (183 aa)) the chain is on the cytoplasmic side. The segment at 1116–1237 (EHPDRISTPS…PPPFPTAYPP (122 aa)) is disordered. 2 stretches are compositionally biased toward polar residues: residues 1141–1152 (VQGSRSSRGSCQ) and 1165–1191 (PSLT…NDWT). The span at 1199–1216 (PASYAAPPPAYHKAAAQQ) shows a compositional bias: low complexity. The span at 1224–1235 (PTTPPPPFPTAY) shows a compositional bias: pro residues.

Belongs to the patched family. As to quaternary structure, interacts (via C-terminal cytoplasmic region) with CG5504/l(2)tid; the interaction is probably direct. Interacts with hh/hedgehog.

It localises to the membrane. Its function is as follows. Segmentation polarity protein. Acts as a receptor for the hedgehog protein (hh). Associates with the smoothened protein (SMO) to transduce the hedgehog signal leading to the activation of wingless, decapentaplegic and patched itself. Participates in cell interactions that establish pattern within the segment and the imaginal disks during development. In the absence of HH, represses the constitutive signaling activity of smo through fused (FU). In Drosophila melanogaster (Fruit fly), this protein is Protein patched.